The following is a 613-amino-acid chain: Isocitrate dehydrogenase kinase/phosphatase (613 aa).

ATP contacts are provided by residues 328–334 (APGIRGL) and K349. D384 is an active-site residue.

It belongs to the AceK family.

The protein resides in the cytoplasm. The enzyme catalyses L-seryl-[isocitrate dehydrogenase] + ATP = O-phospho-L-seryl-[isocitrate dehydrogenase] + ADP + H(+). Bifunctional enzyme which can phosphorylate or dephosphorylate isocitrate dehydrogenase (IDH) on a specific serine residue. This is a regulatory mechanism which enables bacteria to bypass the Krebs cycle via the glyoxylate shunt in response to the source of carbon. When bacteria are grown on glucose, IDH is fully active and unphosphorylated, but when grown on acetate or ethanol, the activity of IDH declines drastically concomitant with its phosphorylation. The chain is Isocitrate dehydrogenase kinase/phosphatase from Cupriavidus necator (strain ATCC 17699 / DSM 428 / KCTC 22496 / NCIMB 10442 / H16 / Stanier 337) (Ralstonia eutropha).